Here is a 231-residue protein sequence, read N- to C-terminus: Non-fluorescent flavoprotein (231 aa).

This sequence belongs to the bacterial luciferase oxidoreductase family. As to quaternary structure, homodimer. The cofactor is FMN.

The sequence is that of Non-fluorescent flavoprotein (luxF) from Photobacterium phosphoreum.